The following is a 393-amino-acid chain: Short chain dehydrogenase sirQ (393 aa).

Leu-54 provides a ligand contact to NADP(+). Residue Ser-233 is the Proton donor of the active site. The Lowers pKa of active site Tyr role is filled by Lys-259. Ala-286 is an NADP(+) binding site.

Belongs to the short-chain dehydrogenases/reductases (SDR) family. Highly divergent.

It participates in mycotoxin biosynthesis. Its function is as follows. Short chain dehydrogenase; part of the gene cluster that mediates the biosynthesis of sirodesmin PL, an epipolythiodioxopiperazine (ETP) characterized by a disulfide bridged cyclic dipeptide and that acts as a phytotoxin which is involved in the blackleg didease of canola. SirD catalyzes the O-prenylation of L-tyrosine (L-Tyr) in the presence of dimethylallyl diphosphate (DMAPP) to yield 4-O-dimethylallyl-L-Tyr, and therefore represents probably the first pathway-specific enzyme in the biosynthesis of sirodesmin PL. 4-O-dimethylallyl-L-Tyr, then undergoes condensation with L-Ser in a reaction catalyzed by the non-ribosomal peptide synthase sirP to form the diketopiperazine (DKP) backbone. Further bishydroxylation of the DKP performed by the cytochrome P450 monooxygenase sirC leads to the production of the intermediate phomamide. This step is essential to form the reactive thiol group required for toxicity of sirodesmin PL. The next steps of sirodesmin biosynthesis are not well understood yet, but some predictions could be made from intermediate compounds identification. Phomamide is converted into phomalizarine via oxidation, probably by sirT. Further oxidation, methylation (by sirM or sirN) and reduction steps convert phomalizarine to deacetyl sirodesmin. Finally, acetyltransferase sirH probably acetylates deacetyl sirodesmin to produce sirodesmin PL. The chain is Short chain dehydrogenase sirQ from Leptosphaeria maculans (Blackleg fungus).